The chain runs to 340 residues: Phenylalanine--tRNA ligase alpha subunit (340 aa).

Position 254 (Glu254) interacts with Mg(2+).

Belongs to the class-II aminoacyl-tRNA synthetase family. Phe-tRNA synthetase alpha subunit type 1 subfamily. As to quaternary structure, tetramer of two alpha and two beta subunits. Mg(2+) serves as cofactor.

It localises to the cytoplasm. The catalysed reaction is tRNA(Phe) + L-phenylalanine + ATP = L-phenylalanyl-tRNA(Phe) + AMP + diphosphate + H(+). This chain is Phenylalanine--tRNA ligase alpha subunit, found in Acidithiobacillus ferrooxidans (strain ATCC 23270 / DSM 14882 / CIP 104768 / NCIMB 8455) (Ferrobacillus ferrooxidans (strain ATCC 23270)).